A 295-amino-acid chain; its full sequence is ESX-3 secretion-associated protein EspG3 (295 aa).

This sequence belongs to the EspG family. In terms of assembly, interacts specifically with ESX-3-dependent PE/PPE proteins.

The protein resides in the cytoplasm. In terms of biological role, specific chaperone for cognate PE/PPE proteins. Plays an important role in preventing aggregation of PE/PPE dimers. In Mycobacterium tuberculosis (strain CDC 1551 / Oshkosh), this protein is ESX-3 secretion-associated protein EspG3.